The primary structure comprises 385 residues: Serpin-Z10 (385 aa).

An RCL region spans residues 333 to 357 (GTEAAAVSVGVVSCTSFRRNPDFVA).

It belongs to the serpin family.

In terms of biological role, probable serine protease inhibitor. The sequence is that of Serpin-Z10 from Arabidopsis thaliana (Mouse-ear cress).